Reading from the N-terminus, the 471-residue chain is Variant surface glycoprotein ILTAT 1.21 (471 aa).

A signal peptide spans 1-21 (MLRALLPSTTLALILAGGGHA). N-linked (GlcNAc...) asparagine glycosylation is found at Asn-64 and Asn-405. The disordered stretch occupies residues 406 to 449 (ATADECPETRCEYDSEKNECRPKKGTETTATGPGERTTPADGKA). Over residues 412 to 431 (PETRCEYDSEKNECRPKKGT) the composition is skewed to basic and acidic residues. Residue Asn-450 is glycosylated (N-linked (GlcNAc...) asparagine). A lipid anchor (GPI-anchor amidated serine) is attached at Ser-454. The propeptide at 455–471 (DSLLIKTSPLWLAFLLF) is removed in mature form.

Its subcellular location is the cell membrane. In terms of biological role, VSG forms a coat on the surface of the parasite. The trypanosome evades the immune response of the host by expressing a series of antigenically distinct VSGs from an estimated 1000 VSG genes. In Trypanosoma brucei brucei, this protein is Variant surface glycoprotein ILTAT 1.21.